The sequence spans 854 residues: Gamma-secretase-activating protein (854 aa).

Belongs to the GSAP family. In terms of assembly, interacts with APP; specifically interacts with the CTF-alpha product of APP. Interacts with the gamma-secretase complex. Post-translationally, the protein is first synthesized as a holoprotein form of 98 kDa and rapidly processed into the gamma-secretase-activating protein 16 kDa C-terminal form, which constitutes the predominant form. In terms of tissue distribution, widely expressed.

Its subcellular location is the golgi apparatus. It localises to the trans-Golgi network. Regulator of gamma-secretase activity, which specifically activates the production of amyloid-beta protein (amyloid-beta protein 40 and amyloid-beta protein 42), without affecting the cleavage of other gamma-secretase targets such has Notch. The gamma-secretase complex is an endoprotease complex that catalyzes the intramembrane cleavage of integral membrane proteins such as Notch receptors and APP (amyloid-beta precursor protein). Specifically promotes the gamma-cleavage of APP CTF-alpha (also named APP-CTF) by the gamma-secretase complex to generate amyloid-beta, while it reduces the epsilon-cleavage of APP CTF-alpha, leading to a low production of AICD. The chain is Gamma-secretase-activating protein (GSAP) from Homo sapiens (Human).